Consider the following 483-residue polypeptide: Alginate biosynthesis protein AlgA (483 aa).

Belongs to the mannose-6-phosphate isomerase type 2 family. As to quaternary structure, monomer. Co(2+) serves as cofactor.

It catalyses the reaction D-mannose 6-phosphate = D-fructose 6-phosphate. It carries out the reaction alpha-D-mannose 1-phosphate + GTP + H(+) = GDP-alpha-D-mannose + diphosphate. It functions in the pathway nucleotide-sugar biosynthesis; GDP-alpha-D-mannose biosynthesis; GDP-alpha-D-mannose from alpha-D-mannose 1-phosphate (GTP route): step 1/1. The protein operates within nucleotide-sugar biosynthesis; GDP-alpha-D-mannose biosynthesis; alpha-D-mannose 1-phosphate from D-fructose 6-phosphate: step 1/2. Its function is as follows. Produces a precursor for alginate polymerization. The alginate layer provides a protective barrier against host immune defenses and antibiotics. The polypeptide is Alginate biosynthesis protein AlgA (algA) (Pseudomonas syringae pv. tomato (strain ATCC BAA-871 / DC3000)).